The chain runs to 206 residues: uncharacterized protein (206 aa).

The Nudix hydrolase domain maps to 29 to 169 (YWHSTFHCWV…DGVFAEGFIV (141 aa)). Positions 69 to 90 (AGHIKSGESIEDGVRELKEELG) match the Nudix box motif. The Mg(2+) site is built by Glu84 and Glu88.

It belongs to the Nudix hydrolase family. Requires Mg(2+) as cofactor.

This is an uncharacterized protein from Clostridium acetobutylicum (strain ATCC 824 / DSM 792 / JCM 1419 / IAM 19013 / LMG 5710 / NBRC 13948 / NRRL B-527 / VKM B-1787 / 2291 / W).